The chain runs to 337 residues: GTP 3',8-cyclase (337 aa).

A Radical SAM core domain is found at 17 to 243 (PFQRQYYYLR…HKSHTDGPAK (227 aa)). R26 serves as a coordination point for GTP. 2 residues coordinate [4Fe-4S] cluster: C33 and C37. Y39 provides a ligand contact to S-adenosyl-L-methionine. Residue C40 participates in [4Fe-4S] cluster binding. GTP is bound at residue R76. S-adenosyl-L-methionine is bound at residue G80. T107 contributes to the GTP binding site. S131 contacts S-adenosyl-L-methionine. Residue K168 coordinates GTP. Residue M202 coordinates S-adenosyl-L-methionine. The [4Fe-4S] cluster site is built by C265 and C268. 270–272 (RLR) is a binding site for GTP. C282 contributes to the [4Fe-4S] cluster binding site.

Belongs to the radical SAM superfamily. MoaA family. As to quaternary structure, monomer and homodimer. [4Fe-4S] cluster is required as a cofactor.

The enzyme catalyses GTP + AH2 + S-adenosyl-L-methionine = (8S)-3',8-cyclo-7,8-dihydroguanosine 5'-triphosphate + 5'-deoxyadenosine + L-methionine + A + H(+). Its pathway is cofactor biosynthesis; molybdopterin biosynthesis. Its function is as follows. Catalyzes the cyclization of GTP to (8S)-3',8-cyclo-7,8-dihydroguanosine 5'-triphosphate. This Haemophilus influenzae (strain 86-028NP) protein is GTP 3',8-cyclase.